The chain runs to 449 residues: Clusterin (449 aa).

Residues 1–22 form the signal peptide; it reads MMKTLLLFVGLLLTWESGQVLG. A Nuclear localization signal motif is present at residues 78–81; the sequence is KKKK. N-linked (GlcNAc...) (complex) asparagine glycosylation is present at Asn86. 5 cysteine pairs are disulfide-bonded: Cys102–Cys313, Cys113–Cys305, Cys116–Cys302, Cys121–Cys295, and Cys129–Cys285. Asn103 is a glycosylation site (N-linked (GlcNAc...) asparagine). The residue at position 133 (Ser133) is a Phosphoserine. Residues Asn145, Asn291, and Asn354 are each glycosylated (N-linked (GlcNAc...) asparagine). Asn374 is a glycosylation site (N-linked (GlcNAc...) (complex) asparagine). The residue at position 396 (Ser396) is a Phosphoserine. The Nuclear localization signal signature appears at 443–447; it reads RKKHR.

This sequence belongs to the clusterin family. In terms of assembly, antiparallel disulfide-linked heterodimer of an alpha chain and a beta chain. Self-associates and forms higher oligomers. Interacts with a broad range of misfolded proteins, including APP, APOC2 and LYZ. Slightly acidic pH promotes interaction with misfolded proteins. Forms high-molecular weight oligomers upon interaction with misfolded proteins. Interacts with APOA1, LRP2, CLUAP1 and PON1. Interacts with the complement membrane attack complex. Interacts (via alpha chain) with XRCC6. Interacts with SYVN1, COMMD1, BTRC, CUL1 and with ubiquitin and SCF (SKP1-CUL1-F-box protein) E3 ubiquitin-protein ligase complexes. Interacts (via alpha chain) with BAX in stressed cells, where BAX undergoes a conformation change leading to association with the mitochondrial membrane. Does not interact with BAX in unstressed cells. Found in a complex with LTF, CLU, EPPIN and SEMG1. Interacts (immaturely glycosylated pre-secreted form) with HSPA5; this interaction promotes CLU stability and facilitates stress-induced CLU retrotranslocation from the secretory pathway to the mitochondria, thereby reducing stress-induced apoptosis by stabilizing mitochondrial membrane integrity. Interacts (isoform 4) with BCL2L1; this interaction releases and activates BAX and promotes cell death. Interacts with TGFBR2 and ACVR1. Interacts (secreted form) with STMN3; this interaction may act as an important modulator during neuronal differentiation. Interacts with VLDLR and LRP8. Post-translationally, proteolytically cleaved on its way through the secretory system, probably within the Golgi lumen. Proteolytic cleavage is not necessary for its chaperone activity. All non-secreted forms are not proteolytically cleaved. Chaperone activity of uncleaved forms is dependent on a non-reducing environment. Polyubiquitinated, leading to proteasomal degradation. Under cellular stress, the intracellular level of cleaved form is reduced due to proteasomal degradation. In terms of processing, extensively glycosylated with sulfated N-linked carbohydrates. About 30% of the protein mass is comprised of complex N-linked carbohydrate. Endoplasmic reticulum (ER) stress induces changes in glycosylation status and increases level of hypoglycosylated forms. Core carbohydrates are essential for chaperone activity. Non-secreted forms are hypoglycosylated or unglycosylated. As to expression, detected in blood plasma, cerebrospinal fluid, milk, seminal plasma and colon mucosa. Detected in the germinal center of colon lymphoid nodules and in colon parasympathetic ganglia of the Auerbach plexus (at protein level). Ubiquitous. Detected in brain, testis, ovary, liver and pancreas, and at lower levels in kidney, heart, spleen and lung.

It is found in the secreted. The protein resides in the cytoplasm. It localises to the nucleus. Its subcellular location is the mitochondrion membrane. The protein localises to the cytosol. It is found in the microsome. The protein resides in the endoplasmic reticulum. It localises to the mitochondrion. Its subcellular location is the perinuclear region. The protein localises to the cytoplasmic vesicle. It is found in the secretory vesicle. The protein resides in the chromaffin granule. Functions as extracellular chaperone that prevents aggregation of non native proteins. Prevents stress-induced aggregation of blood plasma proteins. Inhibits formation of amyloid fibrils by APP, APOC2, B2M, CALCA, CSN3, SNCA and aggregation-prone LYZ variants (in vitro). Does not require ATP. Maintains partially unfolded proteins in a state appropriate for subsequent refolding by other chaperones, such as HSPA8/HSC70. Does not refold proteins by itself. Binding to cell surface receptors triggers internalization of the chaperone-client complex and subsequent lysosomal or proteasomal degradation. Protects cells against apoptosis and against cytolysis by complement: inhibits assembly of the complement membrane attack complex (MAC) by preventing polymerization of C9 pore component of the MAC complex. Intracellular forms interact with ubiquitin and SCF (SKP1-CUL1-F-box protein) E3 ubiquitin-protein ligase complexes and promote the ubiquitination and subsequent proteasomal degradation of target proteins. Promotes proteasomal degradation of COMMD1 and IKBKB. Modulates NF-kappa-B transcriptional activity. A mitochondrial form suppresses BAX-dependent release of cytochrome c into the cytoplasm and inhibit apoptosis. Plays a role in the regulation of cell proliferation. An intracellular form suppresses stress-induced apoptosis by stabilizing mitochondrial membrane integrity through interaction with HSPA5. Secreted form does not affect caspase or BAX-mediated intrinsic apoptosis and TNF-induced NF-kappa-B-activity. Secreted form act as an important modulator during neuronal differentiation through interaction with STMN3. Plays a role in the clearance of immune complexes that arise during cell injury. Its function is as follows. Does not affect caspase or BAX-mediated intrinsic apoptosis and TNF-induced NF-kappa-B-activity. Functionally, does not affect caspase or BAX-mediated intrinsic apoptosis and TNF-induced NF-kappa-B-activity. Promotes cell death through interaction with BCL2L1 that releases and activates BAX. This chain is Clusterin, found in Homo sapiens (Human).